The sequence spans 235 residues: Large ribosomal subunit protein uL1 (235 aa).

This sequence belongs to the universal ribosomal protein uL1 family. Part of the 50S ribosomal subunit.

Binds directly to 23S rRNA. The L1 stalk is quite mobile in the ribosome, and is involved in E site tRNA release. In terms of biological role, protein L1 is also a translational repressor protein, it controls the translation of the L11 operon by binding to its mRNA. The sequence is that of Large ribosomal subunit protein uL1 from Pseudarthrobacter chlorophenolicus (strain ATCC 700700 / DSM 12829 / CIP 107037 / JCM 12360 / KCTC 9906 / NCIMB 13794 / A6) (Arthrobacter chlorophenolicus).